A 156-amino-acid polypeptide reads, in one-letter code: Small ribosomal subunit protein uS7 (156 aa).

This sequence belongs to the universal ribosomal protein uS7 family. Part of the 30S ribosomal subunit. Contacts proteins S9 and S11.

One of the primary rRNA binding proteins, it binds directly to 16S rRNA where it nucleates assembly of the head domain of the 30S subunit. Is located at the subunit interface close to the decoding center, probably blocks exit of the E-site tRNA. The polypeptide is Small ribosomal subunit protein uS7 (Klebsiella pneumoniae subsp. pneumoniae (strain ATCC 700721 / MGH 78578)).